Here is a 224-residue protein sequence, read N- to C-terminus: Ribonuclease 3 (224 aa).

Positions 4–127 (IEKLEQSLTY…IIGAIHLEAG (124 aa)) constitute an RNase III domain. Mg(2+) is bound at residue Glu-40. Asp-44 is an active-site residue. Mg(2+) is bound by residues Asp-113 and Glu-116. Residue Glu-116 is part of the active site. The DRBM domain occupies 154–223 (DYKTKLQEIT…AKIALEKLGA (70 aa)).

The protein belongs to the ribonuclease III family. In terms of assembly, homodimer. It depends on Mg(2+) as a cofactor.

Its subcellular location is the cytoplasm. The catalysed reaction is Endonucleolytic cleavage to 5'-phosphomonoester.. In terms of biological role, digests double-stranded RNA. Involved in the processing of primary rRNA transcript to yield the immediate precursors to the large and small rRNAs (23S and 16S). Also processes some mRNAs, and tRNAs when they are encoded in the rRNA operon. CRISPR (clustered regularly interspaced short palindromic repeat) is an adaptive immune system that provides protection against mobile genetic elements (viruses, transposable elements and conjugative plasmids). CRISPR clusters contain spacers, sequences complementary to antecedent mobile elements, and target invading nucleic acids. CRISPR clusters are transcribed and processed into CRISPR RNA (crRNA). In this organism endogenous ribonuclease 3 and Cas9 are required for correct coprocessing of pre-crRNA and the trans-encoded small RNA (tracrRNA). Cas9, crRNA and tracrRNA are required for cleavage of invading DNA. Complements pre-crRNA and tracrRNA coprocessing defects in an rnc deletion in S.pyogenes strain 370. In Campylobacter jejuni subsp. jejuni serotype O:2 (strain ATCC 700819 / NCTC 11168), this protein is Ribonuclease 3.